Here is a 291-residue protein sequence, read N- to C-terminus: Gamma-sarcoglycan (291 aa).

Residues L38–L58 traverse the membrane as a helical; Signal-anchor for type II membrane protein segment. Residues K59 to L291 lie on the Extracellular side of the membrane. N110 carries an N-linked (GlcNAc...) asparagine glycan. 2 disulfides stabilise this stretch: C265–C290 and C267–C283.

It belongs to the sarcoglycan beta/delta/gamma/zeta family. As to quaternary structure, interacts with the syntrophin SNTA1. Cross-link to form 2 major subcomplexes: one consisting of SGCB, SGCD and SGCG and the other consisting of SGCB and SGCD. The association between SGCB and SGCG is particularly strong while SGCA is loosely associated with the other sarcoglycans. Interacts with FLNC. In terms of processing, disulfide bonds are present.

It localises to the cell membrane. The protein resides in the sarcolemma. Its subcellular location is the cytoplasm. It is found in the cytoskeleton. Component of the sarcoglycan complex, a subcomplex of the dystrophin-glycoprotein complex which forms a link between the F-actin cytoskeleton and the extracellular matrix. In Canis lupus familiaris (Dog), this protein is Gamma-sarcoglycan (SGCG).